A 154-amino-acid polypeptide reads, in one-letter code: 3-hydroxyacyl-[acyl-carrier-protein] dehydratase FabZ (154 aa).

The active site involves H54.

Belongs to the thioester dehydratase family. FabZ subfamily.

The protein resides in the cytoplasm. The enzyme catalyses a (3R)-hydroxyacyl-[ACP] = a (2E)-enoyl-[ACP] + H2O. Involved in unsaturated fatty acids biosynthesis. Catalyzes the dehydration of short chain beta-hydroxyacyl-ACPs and long chain saturated and unsaturated beta-hydroxyacyl-ACPs. This chain is 3-hydroxyacyl-[acyl-carrier-protein] dehydratase FabZ, found in Shewanella baltica (strain OS223).